The following is a 459-amino-acid chain: Arginine biosynthesis bifunctional protein ArgJ, mitochondrial (459 aa).

Substrate is bound by residues Thr-187, Lys-216, Thr-227, Glu-314, Asn-454, and Thr-459. The active-site Nucleophile is Thr-227.

This sequence belongs to the ArgJ family. Heterodimer of an alpha and a beta chain. The alpha and beta chains are autoproteolytically processed from a single precursor protein within the mitochondrion.

It localises to the mitochondrion matrix. The enzyme catalyses N(2)-acetyl-L-ornithine + L-glutamate = N-acetyl-L-glutamate + L-ornithine. The catalysed reaction is L-glutamate + acetyl-CoA = N-acetyl-L-glutamate + CoA + H(+). Its pathway is amino-acid biosynthesis; L-arginine biosynthesis; L-ornithine and N-acetyl-L-glutamate from L-glutamate and N(2)-acetyl-L-ornithine (cyclic): step 1/1. It functions in the pathway amino-acid biosynthesis; L-arginine biosynthesis; N(2)-acetyl-L-ornithine from L-glutamate: step 1/4. Its function is as follows. Catalyzes two activities which are involved in the cyclic version of arginine biosynthesis: the synthesis of acetylglutamate from glutamate and acetyl-CoA, and of ornithine by transacetylation between acetylornithine and glutamate. The polypeptide is Arginine biosynthesis bifunctional protein ArgJ, mitochondrial (Uncinocarpus reesii (strain UAMH 1704)).